The sequence spans 246 residues: Large ribosomal subunit protein uL2 (246 aa).

The segment at 196 to 226 (MSPYAHPHGGGSHQKGGTPVPKTAPPGQKVG) is disordered.

Belongs to the universal ribosomal protein uL2 family. As to quaternary structure, part of the 50S ribosomal subunit. Forms a bridge to the 30S subunit in the 70S ribosome.

One of the primary rRNA binding proteins. Required for association of the 30S and 50S subunits to form the 70S ribosome, for tRNA binding and peptide bond formation. It has been suggested to have peptidyltransferase activity; this is somewhat controversial. Makes several contacts with the 16S rRNA in the 70S ribosome. This chain is Large ribosomal subunit protein uL2, found in Pyrobaculum arsenaticum (strain DSM 13514 / JCM 11321 / PZ6).